We begin with the raw amino-acid sequence, 347 residues long: Elongation factor Ts (347 aa).

The involved in Mg(2+) ion dislocation from EF-Tu stretch occupies residues 80 to 83 (TDFV).

It belongs to the EF-Ts family.

The protein resides in the cytoplasm. Its function is as follows. Associates with the EF-Tu.GDP complex and induces the exchange of GDP to GTP. It remains bound to the aminoacyl-tRNA.EF-Tu.GTP complex up to the GTP hydrolysis stage on the ribosome. The chain is Elongation factor Ts from Streptococcus gordonii (strain Challis / ATCC 35105 / BCRC 15272 / CH1 / DL1 / V288).